Consider the following 161-residue polypeptide: Transcription elongation factor GreA (161 aa).

Residues 46 to 71 (AEYTAAKEKQSFLHGKLQELENNLAL) adopt a coiled-coil conformation.

The protein belongs to the GreA/GreB family.

Functionally, necessary for efficient RNA polymerase transcription elongation past template-encoded arresting sites. The arresting sites in DNA have the property of trapping a certain fraction of elongating RNA polymerases that pass through, resulting in locked ternary complexes. Cleavage of the nascent transcript by cleavage factors such as GreA or GreB allows the resumption of elongation from the new 3'terminus. GreA releases sequences of 2 to 3 nucleotides. The protein is Transcription elongation factor GreA of Syntrophus aciditrophicus (strain SB).